Consider the following 232-residue polypeptide: Ubiquinone biosynthesis O-methyltransferase (232 aa).

S-adenosyl-L-methionine is bound by residues arginine 36, glycine 55, aspartate 76, and methionine 120.

This sequence belongs to the methyltransferase superfamily. UbiG/COQ3 family.

It catalyses the reaction a 3-demethylubiquinol + S-adenosyl-L-methionine = a ubiquinol + S-adenosyl-L-homocysteine + H(+). It carries out the reaction a 3-(all-trans-polyprenyl)benzene-1,2-diol + S-adenosyl-L-methionine = a 2-methoxy-6-(all-trans-polyprenyl)phenol + S-adenosyl-L-homocysteine + H(+). The protein operates within cofactor biosynthesis; ubiquinone biosynthesis. In terms of biological role, O-methyltransferase that catalyzes the 2 O-methylation steps in the ubiquinone biosynthetic pathway. This chain is Ubiquinone biosynthesis O-methyltransferase, found in Paraburkholderia phytofirmans (strain DSM 17436 / LMG 22146 / PsJN) (Burkholderia phytofirmans).